The sequence spans 556 residues: Urocanate hydratase (556 aa).

Residues 53–54 (GG), Gln-131, 177–179 (GMG), Glu-197, 243–244 (NA), 264–268 (QTSAH), 274–275 (YL), and Tyr-323 each bind NAD(+). Residue Cys-411 is part of the active site. Gly-493 is an NAD(+) binding site.

This sequence belongs to the urocanase family. NAD(+) serves as cofactor.

The protein resides in the cytoplasm. It carries out the reaction 4-imidazolone-5-propanoate = trans-urocanate + H2O. The protein operates within amino-acid degradation; L-histidine degradation into L-glutamate; N-formimidoyl-L-glutamate from L-histidine: step 2/3. Catalyzes the conversion of urocanate to 4-imidazolone-5-propionate. The sequence is that of Urocanate hydratase from Pseudomonas fluorescens (strain SBW25).